A 332-amino-acid polypeptide reads, in one-letter code: RING-H2 finger protein ATL81 (332 aa).

The N-terminal stretch at M1 to P19 is a signal peptide. The helical transmembrane segment at I76–C96 threads the bilayer. The RING-type; atypical zinc-finger motif lies at C154–R196.

It belongs to the RING-type zinc finger family. ATL subfamily.

The protein resides in the membrane. It catalyses the reaction S-ubiquitinyl-[E2 ubiquitin-conjugating enzyme]-L-cysteine + [acceptor protein]-L-lysine = [E2 ubiquitin-conjugating enzyme]-L-cysteine + N(6)-ubiquitinyl-[acceptor protein]-L-lysine.. It functions in the pathway protein modification; protein ubiquitination. The polypeptide is RING-H2 finger protein ATL81 (ATL81) (Arabidopsis thaliana (Mouse-ear cress)).